A 182-amino-acid polypeptide reads, in one-letter code: Adenylate kinase (182 aa).

12 to 17 serves as a coordination point for ATP; the sequence is GAGKGT. The segment at 32-61 is NMP; sequence STGDLLREEVSGGTDLGKKAELIMNKGELV. AMP-binding positions include Thr-33, Arg-38, 59 to 61, 85 to 88, and Gln-92; these read ELV and GFPR. The tract at residues 126-132 is LID; it reads GRGRKDD. ATP is bound at residue Arg-127. AMP is bound by residues Arg-129 and Arg-140. Residue Gly-168 coordinates ATP.

The protein belongs to the adenylate kinase family. Monomer.

It localises to the cytoplasm. The catalysed reaction is AMP + ATP = 2 ADP. It functions in the pathway purine metabolism; AMP biosynthesis via salvage pathway; AMP from ADP: step 1/1. Functionally, catalyzes the reversible transfer of the terminal phosphate group between ATP and AMP. Plays an important role in cellular energy homeostasis and in adenine nucleotide metabolism. This is Adenylate kinase from Prochlorococcus marinus (strain SARG / CCMP1375 / SS120).